Reading from the N-terminus, the 405-residue chain is Farnesyl pyrophosphate synthase (405 aa).

Residues Asp158 and Asp162 each contribute to the Mg(2+) site. Residues 158-162 carry the DDXXD motif motif; it reads DDLAD.

The protein belongs to the FPP/GGPP synthase family. The cofactor is Mg(2+).

It carries out the reaction isopentenyl diphosphate + (2E)-geranyl diphosphate = (2E,6E)-farnesyl diphosphate + diphosphate. The protein operates within pheromone biosynthesis. In terms of biological role, farnesyl pyrophosphate synthase involved in murgantiol biosynthesis, a male-released aggregation pheromone, by catalyzing the formation of (2E,6E)-farnesyl diphosphate. This is Farnesyl pyrophosphate synthase from Murgantia histrionica (Harlequin bug).